A 488-amino-acid polypeptide reads, in one-letter code: Germacrene A hydroxylase (488 aa).

Over 1 to 6 (MEVSLT) the chain is Cytoplasmic. Residues 7 to 23 (TSIALATIVFFLYKLLT) form a helical; Signal-anchor for type II membrane protein membrane-spanning segment. Residues 24 to 488 (RPTSSKNRLP…KTELMLVPSF (465 aa)) lie on the Lumenal side of the membrane. Residues asparagine 169, asparagine 260, asparagine 379, and asparagine 412 are each glycosylated (N-linked (GlcNAc...) asparagine). Cysteine 432 provides a ligand contact to heme.

This sequence belongs to the cytochrome P450 family. Requires heme as cofactor. In terms of tissue distribution, expressed in leaf primordia.

It localises to the endoplasmic reticulum membrane. The enzyme catalyses (+)-(R)-germacrene A + 3 reduced [NADPH--hemoprotein reductase] + 3 O2 = germacra-1(10),4,11(13)-trien-12-oate + 3 oxidized [NADPH--hemoprotein reductase] + 4 H2O + 4 H(+). Its pathway is secondary metabolite biosynthesis; terpenoid biosynthesis. In terms of biological role, involved in the biosynthesis of germacrene-derived sesquiterpene lactones. Catalyzes three consecutive oxidations of germacrene A to produce germacrene A acid. Could also catalyze the three-step oxidation of non-natural substrate amorphadiene to artemisinic acid. This is Germacrene A hydroxylase from Helianthus annuus (Common sunflower).